The sequence spans 249 residues: MAIFITGTDTNVGKTIISTWICLHLGWGYFKPIQTGGNSDSDFVSSTTGVPAYDSVFSFPDPIAPHVAAKMSGSSIDILKIQLPEYRKSLSNKINSIPTTEHGRSKFISATTQTKYWEKENNKIVIEGAGGVLVPLQENGTKMVDLIQHLNVPVIIVSRSTLGAINHTLLTLEALQAREIKVLGIVINSMCEDFLDYNSKAIAEYGSTEILATFPYLKEVTRDSILSVQMGDSMKALLESTLKCKNSLL.

Residue 11-16 (NVGKTI) participates in ATP binding. Thr-15 provides a ligand contact to Mg(2+). The active site involves Lys-31. Thr-35 contacts substrate. ATP is bound by residues Asp-40, 127 to 130 (EGAG), 188 to 189 (NS), and 215 to 217 (PYL). Residues Asp-40 and Glu-127 each coordinate Mg(2+).

The protein belongs to the dethiobiotin synthetase family. As to quaternary structure, homodimer. Mg(2+) is required as a cofactor.

The protein localises to the cytoplasm. The enzyme catalyses (7R,8S)-7,8-diammoniononanoate + CO2 + ATP = (4R,5S)-dethiobiotin + ADP + phosphate + 3 H(+). The protein operates within cofactor biosynthesis; biotin biosynthesis; biotin from 7,8-diaminononanoate: step 1/2. In terms of biological role, catalyzes a mechanistically unusual reaction, the ATP-dependent insertion of CO2 between the N7 and N8 nitrogen atoms of 7,8-diaminopelargonic acid (DAPA, also called 7,8-diammoniononanoate) to form a ureido ring. The protein is ATP-dependent dethiobiotin synthetase BioD of Neorickettsia sennetsu (strain ATCC VR-367 / Miyayama) (Ehrlichia sennetsu).